Consider the following 1100-residue polypeptide: DNA repair protein RAD1 (1100 aa).

The tract at residues 1-47 (MSQLFYQGDSDDELQEELTRQTTQASQSSKIKNEDEPDDSNHLNEVE) is disordered. The span at 20-30 (RQTTQASQSSK) shows a compositional bias: polar residues. A compositionally biased stretch (basic and acidic residues) spans 31-47 (IKNEDEPDDSNHLNEVE). Serine 613 carries the phosphoserine modification. The 81-residue stretch at 821-901 (VVIVDTREFN…YPTLLIEFDE (81 aa)) folds into the ERCC4 domain. Residues 1063–1100 (EKEEQEQESTDENLESPGKTTDDNALHDHHNDVPEAPV) form a disordered region. The span at 1065 to 1076 (EEQEQESTDENL) shows a compositional bias: acidic residues. A Phosphoserine modification is found at serine 1071. The residue at position 1072 (threonine 1072) is a Phosphothreonine. The span at 1082 to 1100 (TTDDNALHDHHNDVPEAPV) shows a compositional bias: basic and acidic residues.

The protein belongs to the XPF family. Component of the nucleotide excision repair factor 1 (NEF1) complex consisting of RAD1, RAD10 and RAD14. Interacts with SAW1.

The protein localises to the nucleus. Functionally, involved in nucleotide excision repair of DNA damaged with UV light, bulky adducts, or cross-linking agents. Along with RAD10 forms an endonuclease that specifically degrades single-stranded DNA. This is DNA repair protein RAD1 (RAD1) from Saccharomyces cerevisiae (strain ATCC 204508 / S288c) (Baker's yeast).